Reading from the N-terminus, the 500-residue chain is GTPase Der (500 aa).

2 EngA-type G domains span residues 3-166 (PVVA…MEEL) and 211-384 (IKLA…VSAT). GTP contacts are provided by residues 9 to 16 (GRPNVGKS), 56 to 60 (DTGGI), 118 to 121 (NKID), 217 to 224 (GRPNVGKS), 264 to 268 (DTAGV), and 329 to 332 (NKWD). One can recognise a KH-like domain in the interval 385-469 (KRVGTSVLTR…PIRIQFQNSE (85 aa)). The tract at residues 481–500 (LSQERQRKRLVGAVKNRNKK) is disordered. Residues 486–500 (QRKRLVGAVKNRNKK) show a composition bias toward basic residues.

The protein belongs to the TRAFAC class TrmE-Era-EngA-EngB-Septin-like GTPase superfamily. EngA (Der) GTPase family. In terms of assembly, associates with the 50S ribosomal subunit.

In terms of biological role, GTPase that plays an essential role in the late steps of ribosome biogenesis. This is GTPase Der from Aliivibrio salmonicida (strain LFI1238) (Vibrio salmonicida (strain LFI1238)).